The primary structure comprises 328 residues: Beta-ketoacyl-[acyl-carrier-protein] synthase III (328 aa).

Catalysis depends on residues cysteine 122 and histidine 255. The interval 256–260 (QANIR) is ACP-binding. Asparagine 285 is an active-site residue.

It belongs to the thiolase-like superfamily. FabH family. As to quaternary structure, homodimer.

The protein resides in the cytoplasm. The catalysed reaction is malonyl-[ACP] + acetyl-CoA + H(+) = 3-oxobutanoyl-[ACP] + CO2 + CoA. It participates in lipid metabolism; fatty acid biosynthesis. In terms of biological role, catalyzes the condensation reaction of fatty acid synthesis by the addition to an acyl acceptor of two carbons from malonyl-ACP. Catalyzes the first condensation reaction which initiates fatty acid synthesis and may therefore play a role in governing the total rate of fatty acid production. Possesses both acetoacetyl-ACP synthase and acetyl transacylase activities. Its substrate specificity determines the biosynthesis of branched-chain and/or straight-chain of fatty acids. This is Beta-ketoacyl-[acyl-carrier-protein] synthase III from Polynucleobacter necessarius subsp. necessarius (strain STIR1).